An 89-amino-acid polypeptide reads, in one-letter code: Small ribosomal subunit protein uS15 (89 aa).

It belongs to the universal ribosomal protein uS15 family. In terms of assembly, part of the 30S ribosomal subunit. Forms a bridge to the 50S subunit in the 70S ribosome, contacting the 23S rRNA.

One of the primary rRNA binding proteins, it binds directly to 16S rRNA where it helps nucleate assembly of the platform of the 30S subunit by binding and bridging several RNA helices of the 16S rRNA. Functionally, forms an intersubunit bridge (bridge B4) with the 23S rRNA of the 50S subunit in the ribosome. The sequence is that of Small ribosomal subunit protein uS15 from Rhizorhabdus wittichii (strain DSM 6014 / CCUG 31198 / JCM 15750 / NBRC 105917 / EY 4224 / RW1) (Sphingomonas wittichii).